Here is a 192-residue protein sequence, read N- to C-terminus: Phosphomevalonate kinase (192 aa).

Residues 17–23 (KRKSGKD) and Arg-141 contribute to the ATP site. Substrate is bound at residue Asn-170. ATP contacts are provided by His-171 and Gln-180.

In terms of assembly, monomer.

Its subcellular location is the cytoplasm. The protein resides in the cytosol. The enzyme catalyses (R)-5-phosphomevalonate + ATP = (R)-5-diphosphomevalonate + ADP. It functions in the pathway isoprenoid biosynthesis; isopentenyl diphosphate biosynthesis via mevalonate pathway; isopentenyl diphosphate from (R)-mevalonate: step 2/3. Functionally, catalyzes the reversible ATP-dependent phosphorylation of mevalonate 5-phosphate to produce mevalonate diphosphate and ADP, a key step in the mevalonic acid mediated biosynthesis of isopentenyl diphosphate and other polyisoprenoid metabolites. The chain is Phosphomevalonate kinase (PMVK) from Bos taurus (Bovine).